The primary structure comprises 283 residues: Diaminopimelate epimerase (283 aa).

Substrate contacts are provided by Asn-13, Gln-46, and Asn-66. Residue Cys-75 is the Proton donor of the active site. Substrate is bound by residues 76-77 (GN), Asn-166, Asn-199, and 217-218 (ER). Cys-226 serves as the catalytic Proton acceptor. Residue 227–228 (GT) participates in substrate binding.

This sequence belongs to the diaminopimelate epimerase family. Homodimer.

The protein resides in the cytoplasm. It carries out the reaction (2S,6S)-2,6-diaminopimelate = meso-2,6-diaminopimelate. It functions in the pathway amino-acid biosynthesis; L-lysine biosynthesis via DAP pathway; DL-2,6-diaminopimelate from LL-2,6-diaminopimelate: step 1/1. Catalyzes the stereoinversion of LL-2,6-diaminopimelate (L,L-DAP) to meso-diaminopimelate (meso-DAP), a precursor of L-lysine and an essential component of the bacterial peptidoglycan. The sequence is that of Diaminopimelate epimerase from Herminiimonas arsenicoxydans.